The primary structure comprises 113 residues: Beta-microseminoprotein A1 (113 aa).

A signal peptide spans 1–20; the sequence is MNVLLGGLVIFATFVTLCNG. Disulfide bonds link Cys-22/Cys-70, Cys-38/Cys-62, Cys-57/Cys-93, Cys-60/Cys-69, and Cys-84/Cys-107.

Belongs to the beta-microseminoprotein family.

It is found in the secreted. The protein is Beta-microseminoprotein A1 (MSPA) of Saguinus oedipus (Cotton-top tamarin).